Here is a 202-residue protein sequence, read N- to C-terminus: Small ribosomal subunit protein uS4 (202 aa).

The tract at residues 15–42 is disordered; it reads LGDLPGLTRKAAKRSYPPGQHGQARRKR. One can recognise an S4 RNA-binding domain in the interval 90-152; it reads NRLDNVCFRL…KCSKQLAEGN (63 aa).

Belongs to the universal ribosomal protein uS4 family. In terms of assembly, part of the 30S ribosomal subunit. Contacts protein S5. The interaction surface between S4 and S5 is involved in control of translational fidelity.

One of the primary rRNA binding proteins, it binds directly to 16S rRNA where it nucleates assembly of the body of the 30S subunit. Functionally, with S5 and S12 plays an important role in translational accuracy. This Parasynechococcus marenigrum (strain WH8102) protein is Small ribosomal subunit protein uS4.